The following is a 956-amino-acid chain: Phosphatidylinositol 4-kinase PIK1a (956 aa).

Residues 1–120 (MPVAPHELRD…QTVRKFINKL (120 aa)) form the PIK helical domain. Residues 545–573 (SRDWAKSTPGSPVARSSQEDEKFYGNVSS) form a disordered region. Positions 658–939 (EDWNEKKHRI…YLIEKSVGSM (282 aa)) constitute a PI3K/PI4K catalytic domain. The interval 664–670 (KHRIRKS) is G-loop. The catalytic loop stretch occupies residues 805–813 (QIKDRHNGN). Residues 824-848 (HIDFGFLLSNSPGSVGFEAAPFKLT) form an activation loop region.

This sequence belongs to the PI3/PI4-kinase family. Type III PI4K subfamily.

Its subcellular location is the nucleus. It carries out the reaction a 1,2-diacyl-sn-glycero-3-phospho-(1D-myo-inositol) + ATP = a 1,2-diacyl-sn-glycero-3-phospho-(1D-myo-inositol 4-phosphate) + ADP + H(+). Functionally, acts on phosphatidylinositol (PI) in the first committed step in the production of the second messenger inositol 1,4,5,-trisphosphate. This chain is Phosphatidylinositol 4-kinase PIK1a (PIKA), found in Candida albicans (strain SC5314 / ATCC MYA-2876) (Yeast).